We begin with the raw amino-acid sequence, 221 residues long: UPF0319 protein CGSHiGG_02140 (221 aa).

Residues 1–21 (MKLRAVVLGLATLCTSTATFA) form the signal peptide.

Belongs to the UPF0319 family.

The polypeptide is UPF0319 protein CGSHiGG_02140 (Haemophilus influenzae (strain PittGG)).